Reading from the N-terminus, the 28-residue chain is Aspartate aminotransferase, mitochondrial (28 aa).

This sequence belongs to the class-I pyridoxal-phosphate-dependent aminotransferase family. As to quaternary structure, homodimer. It depends on pyridoxal 5'-phosphate as a cofactor.

The protein localises to the mitochondrion matrix. The enzyme catalyses L-aspartate + 2-oxoglutarate = oxaloacetate + L-glutamate. Functionally, plays a key role in amino acid metabolism. Important for metabolite exchange between mitochondria and cytosol. In Catharanthus roseus (Madagascar periwinkle), this protein is Aspartate aminotransferase, mitochondrial.